We begin with the raw amino-acid sequence, 495 residues long: UDP-glycosyltransferase 73C11 (495 aa).

The active-site Proton acceptor is the histidine 24. Position 24 (histidine 24) interacts with an anthocyanidin. Aspartate 129 (charge relay) is an active-site residue. UDP-alpha-D-glucose contacts are provided by glutamine 358, histidine 373, tryptophan 376, asparagine 377, serine 378, and glutamate 381. Glycine 396 serves as a coordination point for an anthocyanidin. Residues aspartate 397 and glutamine 398 each contribute to the UDP-alpha-D-glucose site.

It belongs to the UDP-glycosyltransferase family.

It carries out the reaction oleanolate + UDP-alpha-D-glucose = oleanolate 3-O-beta-D-glucoside + UDP + H(+). In terms of biological role, catalyzes the transfer of a glucose (Glc) moiety from UDP-Glc to the C-3 position of the oleanane sapogenins oleanolate and hederagenin, and to the C-28 carboxylic group of the lupane sapogenin betulinate. The monoglucosylated hederagenin 3-O-beta-D-glucoside is a feeding deterrent of the yellow-striped flea beetle (Phyllotreta nemorum). This is UDP-glycosyltransferase 73C11 from Barbarea vulgaris (Yellow rocket).